The chain runs to 82 residues: Musculoskeletal embryonic nuclear protein 1 (82 aa).

The tract at residues 1–34 is disordered; sequence MSQAGAQEAPIKKKRPPVKEEDLKGARGNLTKNQ. Phosphoserine is present on Ser2. Positions 10 to 18 match the Nuclear localization signal motif; the sequence is PIKKKRPPV.

It belongs to the MUSTN1 family.

It localises to the nucleus. Its subcellular location is the cytoplasm. It is found in the secreted. The protein resides in the extracellular space. Functionally, required for chondrocyte development and proliferation. Plays a role in myoblast differentiation and fusion. Modulates skeletal muscle extracellular matrix composition. Plays a role in skeletal muscle function. Plays a role in glucose homeostasis. The sequence is that of Musculoskeletal embryonic nuclear protein 1 (MUSTN1) from Bos taurus (Bovine).